We begin with the raw amino-acid sequence, 329 residues long: Cytosolic arginine sensor for mTORC1 subunit 2 (329 aa).

2 ACT domains span residues 72–140 (ADAT…HTLS) and 262–322 (ELWK…HALK).

It belongs to the GATS family. In terms of assembly, forms homodimers and heterodimers with CASTOR1. Interacts with the GATOR2 complex which is composed of MIOS, SEC13, SEH1L, WDR24 and WDR59; the interaction is not regulated by arginine.

The protein localises to the cytoplasm. The protein resides in the cytosol. Functionally, functions as a negative regulator of the TORC1 signaling pathway through the GATOR complex. As part of homodimers or heterodimers with CASTOR1, directly binds and inhibits the GATOR subcomplex GATOR2 and thereby mTORC1. Does not directly bind arginine, but binding of arginine to CASTOR1 disrupts the interaction of CASTOR2-containing heterodimers with GATOR2 which can in turn activate mTORC1 and the TORC1 signaling pathway. This is Cytosolic arginine sensor for mTORC1 subunit 2 from Mus musculus (Mouse).